A 557-amino-acid polypeptide reads, in one-letter code: Putative glutathione-regulated potassium-efflux system protein KefB (557 aa).

10 consecutive transmembrane segments (helical) span residues 2–22, 24–44, 56–76, 84–104, 121–141, 146–166, 176–196, 199–219, 237–257, and 260–280; these read LGYL…ISDV, EILH…GLEL, IFGV…GLLM, AAVV…LQLM, VLLF…LLAG, HFDW…LIGG, FIAA…LVLG, LFMD…GVLL, GLLL…GVLY, and LLWV…VLYL. Residues 356-475 enclose the RCK N-terminal domain; it reads KPQVIVVGFG…AGVTQFSRET (120 aa).

It belongs to the monovalent cation:proton antiporter 2 (CPA2) transporter (TC 2.A.37) family. KefB subfamily. In terms of assembly, interacts with the regulatory subunit KefG.

Its subcellular location is the cell inner membrane. Its function is as follows. Pore-forming subunit of a potassium efflux system that confers protection against electrophiles. Catalyzes K(+)/H(+) antiport. The sequence is that of Putative glutathione-regulated potassium-efflux system protein KefB from Shigella flexneri.